Consider the following 435-residue polypeptide: Zinc finger CCCH domain-containing protein 10 (435 aa).

A disordered region spans residues 1–36; it reads MPDRDSYANGTGSSGGGPGGGGSEEASGAGTGSGGA. Over residues 12–35 the composition is skewed to gly residues; the sequence is GSSGGGPGGGGSEEASGAGTGSGG. C3H1-type zinc fingers lie at residues 36–63, 73–99, and 134–161; these read ATSDAICRDFLRNVCKRGKRCRYRHPDM, KNEFIFCHDFQNKECSRPNCRFIHGSK, and KEEVPICRDFLKGDCQRGAKCKFRHLQR. Positions 166-190 are disordered; the sequence is DARGGGGTGGGGSTGSAPPGRRHDL. The segment covering 168 to 179 has biased composition (gly residues); it reads RGGGGTGGGGST. Omega-N-methylarginine occurs at positions 186 and 187. Residues 235 to 281 are a coiled coil; sequence GVECRLLEEENALLRKRVEELKKQVSNLLATNEVLLEQNAQFRNQAK. The segment covering 315-331 has biased composition (polar residues); it reads TTLSSQALQPRPVSQQE. The tract at residues 315-363 is disordered; the sequence is TTLSSQALQPRPVSQQELVAPTGAPAAPPTNAAPPAAPPPPPPHLNPEI. Over residues 340-359 the composition is skewed to pro residues; sequence AAPPTNAAPPAAPPPPPPHL.

The protein resides in the nucleus. Its function is as follows. Specific regulator of miRNA biogenesis. Binds, via the C3H1-type zinc finger domains, to the binding motif 5'-GCAGCGC-3' on microRNA pri-MIR143 and negatively regulates the processing to mature microRNA. In Mus musculus (Mouse), this protein is Zinc finger CCCH domain-containing protein 10 (Zc3h10).